The sequence spans 206 residues: tRNA(Phe) 7-((3-amino-3-carboxypropyl)-4-demethylwyosine(37)-N(4))-methyltransferase 2 (206 aa).

This sequence belongs to the TYW3 family.

The enzyme catalyses 4-demethyl-7-[(3S)-3-amino-3-carboxypropyl]wyosine(37) in tRNA(Phe) + S-adenosyl-L-methionine = 7-[(3S)-3-amino-3-carboxypropyl]wyosine(37) in tRNA(Phe) + S-adenosyl-L-homocysteine + H(+). Functionally, S-adenosyl-L-methionine-dependent methyltransferase that acts as a component of the wyosine derivatives biosynthesis pathway. Probably methylates N-4 position of wybutosine-86 to produce wybutosine-72. The polypeptide is tRNA(Phe) 7-((3-amino-3-carboxypropyl)-4-demethylwyosine(37)-N(4))-methyltransferase 2 (Pyrococcus furiosus (strain ATCC 43587 / DSM 3638 / JCM 8422 / Vc1)).